The following is a 221-amino-acid chain: Thiopurine S-methyltransferase (221 aa).

The S-adenosyl-L-methionine site is built by tryptophan 12, leucine 47, glutamate 68, and arginine 125.

Belongs to the class I-like SAM-binding methyltransferase superfamily. TPMT family.

The protein localises to the cytoplasm. It catalyses the reaction S-adenosyl-L-methionine + a thiopurine = S-adenosyl-L-homocysteine + a thiopurine S-methylether.. The sequence is that of Thiopurine S-methyltransferase from Legionella pneumophila subsp. pneumophila (strain Philadelphia 1 / ATCC 33152 / DSM 7513).